We begin with the raw amino-acid sequence, 175 residues long: Large ribosomal subunit protein uL10 (175 aa).

It belongs to the universal ribosomal protein uL10 family. As to quaternary structure, part of the ribosomal stalk of the 50S ribosomal subunit. The N-terminus interacts with L11 and the large rRNA to form the base of the stalk. The C-terminus forms an elongated spine to which L12 dimers bind in a sequential fashion forming a multimeric L10(L12)X complex.

Functionally, forms part of the ribosomal stalk, playing a central role in the interaction of the ribosome with GTP-bound translation factors. The protein is Large ribosomal subunit protein uL10 of Synechococcus sp. (strain CC9311).